Reading from the N-terminus, the 94-residue chain is Cystatin-A1 (94 aa).

The Secondary area of contact motif lies at 45–49 (QLVAG).

It belongs to the cystatin family.

It localises to the cytoplasm. Functionally, intracellular thiol proteinase inhibitor. Inhibits papain, but not cathepsin B. The protein is Cystatin-A1 (cpiA) of Dictyostelium discoideum (Social amoeba).